The primary structure comprises 706 residues: MNSLFASTARGLEELLKSELEALGAHDCKIVQGGVHFQGDDRLMYQSLLWSRLASRILLPLNEFKVYSDLDLYLGVQAIDWPSIFGVDKTFAVHFSGVNDEIRNSQYGALKVKDAIVDSFTRKMDQRPTVAKQQPDIRVNVFLQRDMASVALDLSGEGLHQRGYRDLTGQAPLKENLAAAIIQRSGWQPGTPMVDPMCGSGTLLIEAAMMASDRAPGLHRGHWGFTAWSAFNEALWRELTTEAQVRARRGLLETSSRFFGSDIDRRVIEMARANARRAGVAELITFNANDISKLVNPLPEGPVGTVISNPPYGERLESEPALIALHNMFGRMMKTAFGGWRLSLFSASPELLSCLQLRADREFKAKNGPLDCVQKNYQLTANPQGAGGALVAEDYANRLRKNVKKLDKWAKQQGIECYRLYDADLPDYNVAVDRYGSKVVVQEYAPPKTIDPQKARQRLFDVINATLAVLELPSNQLVLKTRERQKGKNQYEKLAQKGEFLLVSEYNAKLWVNLTDYLDTGLFLDHRIARQMLGKMSQGKDFLNLFAYTGTASVHAGLGGARSTTTVDMSRTYLEWAEKNLRVNGLTGQQHRLIQADCLSWLSNTDEQFDVIFIDPPTFSNSKRMETTFDVQRDHLVLMKELKRLLRRKGTIMFSNNKRGFQMDLAGIAALGLEAKEITALTQSEDFARNRQIHNCWLVTHSQEEK.

In terms of domain architecture, THUMP spans 43 to 154 (LMYQSLLWSR…RDMASVALDL (112 aa)).

It belongs to the methyltransferase superfamily. RlmKL family.

The protein localises to the cytoplasm. It catalyses the reaction guanosine(2445) in 23S rRNA + S-adenosyl-L-methionine = N(2)-methylguanosine(2445) in 23S rRNA + S-adenosyl-L-homocysteine + H(+). The enzyme catalyses guanosine(2069) in 23S rRNA + S-adenosyl-L-methionine = N(2)-methylguanosine(2069) in 23S rRNA + S-adenosyl-L-homocysteine + H(+). Its function is as follows. Specifically methylates the guanine in position 2445 (m2G2445) and the guanine in position 2069 (m7G2069) of 23S rRNA. The chain is Ribosomal RNA large subunit methyltransferase K/L from Yersinia pseudotuberculosis serotype IB (strain PB1/+).